A 693-amino-acid polypeptide reads, in one-letter code: Iron-sulfur clusters transporter atm1, mitochondrial (693 aa).

Residues 1–28 (MLERCPWKLISSPRNIPARSFLNSRGTY) constitute a mitochondrion transit peptide. Residues 29-118 (LVLRKSNILP…PKGKTNLKVR (90 aa)) are Mitochondrial matrix-facing. Residues 119 to 140 (VVSALALLVAAKILNVQVPFYF) traverse the membrane as a helical segment. Residues 119-409 (VVSALALLVA…LGSVYREMRQ (291 aa)) form the ABC transmembrane type-1 domain. Residues 141–163 (KSIIDTMNTTLVQEVGALWSTVG) are Mitochondrial intermembrane-facing. A helical membrane pass occupies residues 164 to 187 (AVVLGYGFARIFSTVFQELRNSVF). Residues 188–236 (AIVSQSAIRSVSSNVYQHLLNLDMNFHLSKQTGSITRAMDRGTKGISFI) are Mitochondrial matrix-facing. The helical transmembrane segment at 237-260 (LSSMVLHIIPITLEIAMVSGILTY) threads the bilayer. Position 261 (lysine 261) is a topological domain, mitochondrial intermembrane. A helical membrane pass occupies residues 262–282 (YGPSFSAIAATTVALYALFTV). Residues 283 to 348 (RTTSWRTVFR…ANVKVASSLA (66 aa)) lie on the Mitochondrial matrix side of the membrane. Residues 288–292 (RTVFR) and 351–354 (NSGQ) each bind glutathione. The chain crosses the membrane as a helical span at residues 349 to 367 (FLNSGQAIIFSTALTLMMY). The Mitochondrial intermembrane portion of the chain corresponds to 368–382 (MGCRGIVTSNLTVGD). The chain crosses the membrane as a helical span at residues 383–404 (LVMINQLVFQLSIPLNFLGSVY). Glycine 401 lines the glutathione pocket. The Mitochondrial matrix segment spans residues 405-693 (REMRQAFTDM…FGESNKSGDA (289 aa)). The 237-residue stretch at 443–679 (IQFDNVHFSY…NSVYTSMWHS (237 aa)) folds into the ABC transporter domain. Residues tyrosine 452 and 476–487 (GASGCGKSTILR) each bind ATP.

Belongs to the ABC transporter superfamily. ABCB family. Heavy Metal importer (TC 3.A.1.210) subfamily. As to quaternary structure, homodimer.

The protein resides in the mitochondrion inner membrane. Its function is as follows. Performs an essential function in the generation of cytoplasmic iron-sulfur proteins by mediating the ATP-dependent export of Fe/S cluster precursors synthesized by nfs1 and other mitochondrial proteins. Hydrolyzes ATP. Binds glutathione and may function by transporting a glutathione-conjugated iron-sulfur compound. The sequence is that of Iron-sulfur clusters transporter atm1, mitochondrial from Schizosaccharomyces pombe (strain 972 / ATCC 24843) (Fission yeast).